We begin with the raw amino-acid sequence, 426 residues long: Putative acid phosphatase 1 (426 aa).

An N-terminal signal peptide occupies residues 1–18 (MRVLFYVFPFVIFALSQA). Residues 19–388 (QLISVHVIFR…HNWTMTTVSW (370 aa)) lie on the Extracellular side of the membrane. The active-site Nucleophile is histidine 29. Residues asparagine 37 and asparagine 145 are each glycosylated (N-linked (GlcNAc...) asparagine). Cysteine 133 and cysteine 369 are disulfide-bonded. The active-site Proton donor is aspartate 276. An N-linked (GlcNAc...) asparagine glycan is attached at asparagine 380. Residues 389 to 409 (ILIGISAFLLIILIIMSYLAV) form a helical membrane-spanning segment. Residues 410-426 (RYKNRSVVTIKKVCLEN) lie on the Cytoplasmic side of the membrane.

Belongs to the histidine acid phosphatase family.

Its subcellular location is the membrane. It carries out the reaction a phosphate monoester + H2O = an alcohol + phosphate. The protein is Putative acid phosphatase 1 of Caenorhabditis briggsae.